We begin with the raw amino-acid sequence, 193 residues long: MFGLGLADVILERFKDFMREQPEPYKFLQVFYAQEKERFLNHKMSDYIKQNKSKEEASILARQGFVSAVGRALEKIIELLLKDFCIKNNVKMTNDKILRAKRINGELDRVKRALWVHFGEYSVLPDIILYQTNKDNIKILAILSVKNSFRERFTETPYWKLKLLQSPVTSHIKVFMITPDNDDEISFKDKPKG.

Belongs to the BsaWI type II restriction endonuclease family.

It carries out the reaction Endonucleolytic cleavage of DNA to give specific double-stranded fragments with terminal 5'-phosphates.. In terms of biological role, a P subtype probable restriction enzyme that recognizes the double-stranded sequence CCGG; the cleavage site is unknown. The protein is Probable type II restriction enzyme HpyAORF263P of Helicobacter pylori (strain ATCC 700392 / 26695) (Campylobacter pylori).